The sequence spans 95 residues: Co-chaperonin GroES (95 aa).

This sequence belongs to the GroES chaperonin family. In terms of assembly, heptamer of 7 subunits arranged in a ring. Interacts with the chaperonin GroEL.

The protein localises to the cytoplasm. Functionally, together with the chaperonin GroEL, plays an essential role in assisting protein folding. The GroEL-GroES system forms a nano-cage that allows encapsulation of the non-native substrate proteins and provides a physical environment optimized to promote and accelerate protein folding. GroES binds to the apical surface of the GroEL ring, thereby capping the opening of the GroEL channel. This Caldicellulosiruptor bescii (strain ATCC BAA-1888 / DSM 6725 / KCTC 15123 / Z-1320) (Anaerocellum thermophilum) protein is Co-chaperonin GroES.